A 134-amino-acid chain; its full sequence is Transcription antitermination protein NusB (134 aa).

The protein belongs to the NusB family.

Involved in transcription antitermination. Required for transcription of ribosomal RNA (rRNA) genes. Binds specifically to the boxA antiterminator sequence of the ribosomal RNA (rrn) operons. This chain is Transcription antitermination protein NusB, found in Syntrophomonas wolfei subsp. wolfei (strain DSM 2245B / Goettingen).